A 329-amino-acid chain; its full sequence is Epoxide hydrolase (329 aa).

Positions 35–308 (PAVLFCHGFP…DNVGHWVQHE (274 aa)) constitute an AB hydrolase-1 domain. Catalysis depends on D111, which acts as the Nucleophile. The Proton donor role is filled by Y242. H303 acts as the Proton acceptor in catalysis.

Belongs to the AB hydrolase superfamily. Epoxide hydrolase family. In terms of assembly, homodimer.

The enzyme catalyses an epoxide + H2O = an ethanediol. The catalysed reaction is (R)-styrene oxide + H2O = (R)-styrene glycol. It carries out the reaction (S)-styrene oxide + H2O = (S)-styrene glycol. It catalyses the reaction 3,4-epoxy-1-cyclohexene + H2O = cyclohex-3-ene-1,2-diol. Its function is as follows. Catalyzes the hydrolysis of various epoxides into diols. In vitro, shows the strongest activity toward aromatic and cyclic aliphatic epoxide compounds, since it shows strong activity toward (R)-styrene oxide, (S)-styrene oxide, and 3,4-epoxy-1-cyclohexene, but very weak activity toward (R)-epichlorohydrin, (S)-epichlorohydrin, and 1,2-epoxy-9-decene. The polypeptide is Epoxide hydrolase (Caballeronia sordidicola (Burkholderia sordidicola)).